Here is a 515-residue protein sequence, read N- to C-terminus: 2-isopropylmalate synthase (515 aa).

The 263-residue stretch at 4–266 (ISVFDTTLRD…ETGLILKEIK (263 aa)) folds into the Pyruvate carboxyltransferase domain. Positions 13, 201, 203, and 237 each coordinate Mn(2+). Residues 391–515 (ELQTLQVNYG…AEVYGSKVEV (125 aa)) are regulatory domain.

Belongs to the alpha-IPM synthase/homocitrate synthase family. LeuA type 1 subfamily. Homodimer. The cofactor is Mn(2+).

The protein resides in the cytoplasm. It catalyses the reaction 3-methyl-2-oxobutanoate + acetyl-CoA + H2O = (2S)-2-isopropylmalate + CoA + H(+). It participates in amino-acid biosynthesis; L-leucine biosynthesis; L-leucine from 3-methyl-2-oxobutanoate: step 1/4. Functionally, catalyzes the condensation of the acetyl group of acetyl-CoA with 3-methyl-2-oxobutanoate (2-ketoisovalerate) to form 3-carboxy-3-hydroxy-4-methylpentanoate (2-isopropylmalate). The sequence is that of 2-isopropylmalate synthase from Halalkalibacterium halodurans (strain ATCC BAA-125 / DSM 18197 / FERM 7344 / JCM 9153 / C-125) (Bacillus halodurans).